Consider the following 1685-residue polypeptide: Myomesin-1 (1685 aa).

A disordered region spans residues 33–80 (KKRSAVYTQGSTAYSSRSSAAHRRESEAFRRASASSSQQQASQHALSS). Low complexity-rich tracts occupy residues 41 to 51 (QGSTAYSSRSS) and 63 to 80 (RASASSSQQQASQHALSS). Residue Ser-113 is modified to Phosphoserine. The tract at residues 177–244 (GITTSKQSTA…TSEKKSRKVV (68 aa)) is disordered. Residues 179–220 (TTSKQSTASKQTTASKQSTASKQSTASKQSTASRQSTASRQS) are compositionally biased toward low complexity. 6 repeat units span residues 182–187 (KQSTAS), 188–193 (KQTTAS), 194–199 (KQSTAS), 200–205 (KQSTAS), 206–211 (KQSTAS), and 212–217 (RQSTAS). A 6 X 6 AA tandem repeats region spans residues 182–217 (KQSTASKQTTASKQSTASKQSTASKQSTASRQSTAS). A compositionally biased stretch (polar residues) spans 221-233 (VVSKQATSALQQE). Ig-like C2-type domains follow at residues 277-368 (PEFI…ASVV) and 396-498 (PYGY…AYVF). 3 Fibronectin type-III domains span residues 512 to 607 (APLD…ALDP), 640 to 734 (PPTD…VVGD), and 741 to 834 (APGK…VKAA). A disordered region spans residues 840 to 938 (SPDVCPALSD…TDRAPPSPPC (99 aa)). Over residues 874-888 (LLGSKPNKPSLPSSS) the composition is skewed to low complexity. Phosphoserine is present on residues Ser-883 and Ser-887. A compositionally biased stretch (polar residues) spans 889-902 (QNLGQTEVSKVSET). Residues 920 to 931 (SKSDPLKKKTDR) show a composition bias toward basic and acidic residues. Fibronectin type-III domains lie at 933-1034 (PPSP…CEEW) and 1041-1140 (PPHS…TRPG). Position 1054 is a phosphoserine (Ser-1054). 3 Ig-like C2-type domains span residues 1132–1230 (PVVA…EELK), 1358–1444 (PHFV…LKLV), and 1573–1662 (RVLG…FTVS). A disulfide bridge connects residues Cys-1160 and Cys-1210.

As to quaternary structure, homodimer. Interacts with TTN/titin. Interacts with PNKD.

It is found in the cytoplasm. It localises to the myofibril. The protein localises to the sarcomere. The protein resides in the m line. Functionally, major component of the vertebrate myofibrillar M band. Binds myosin, titin, and light meromyosin. This binding is dose dependent. This chain is Myomesin-1 (MYOM1), found in Homo sapiens (Human).